Consider the following 485-residue polypeptide: Aldehyde dehydrogenase family 3 member A2 (485 aa).

At 1–463 (MEREVQRVRQ…FLLRRFNKEK (463 aa)) the chain is on the cytoplasmic side. 185–190 (GNTAVG) is an NAD(+) binding site. Residues E207 and C241 contribute to the active site. Phosphoserine is present on S293. A helical membrane pass occupies residues 464-484 (LGLLVLTFLGIVAAVLVNAGY). A Prevents secretion from ER motif is present at residues 481–484 (NAGY).

It belongs to the aldehyde dehydrogenase family. Homodimer.

It localises to the microsome membrane. The protein resides in the endoplasmic reticulum membrane. It carries out the reaction an aldehyde + NAD(+) + H2O = a carboxylate + NADH + 2 H(+). The catalysed reaction is a fatty aldehyde + NAD(+) + H2O = a fatty acid + NADH + 2 H(+). It catalyses the reaction (2E)-hexadecenal + NAD(+) + H2O = (E)-hexadec-2-enoate + NADH + 2 H(+). The enzyme catalyses hexadecanoate + NADH + 2 H(+) = hexadecanal + NAD(+) + H2O. It carries out the reaction 22-oxodocosanoate + NAD(+) + H2O = docosanedioate + NADH + 2 H(+). The catalysed reaction is 2,6,10,14-tetramethylpentadecanal + NAD(+) + H2O = 2,6,10,14-tetramethylpentadecanoate + NADH + 2 H(+). It catalyses the reaction octadecanal + NAD(+) + H2O = octadecanoate + NADH + 2 H(+). The enzyme catalyses dodecanoate + NADH + 2 H(+) = dodecanal + NAD(+) + H2O. It carries out the reaction decanal + NAD(+) + H2O = decanoate + NADH + 2 H(+). The catalysed reaction is tetradecanal + NAD(+) + H2O = tetradecanoate + NADH + 2 H(+). It catalyses the reaction octanal + NAD(+) + H2O = octanoate + NADH + 2 H(+). The enzyme catalyses heptanal + NAD(+) + H2O = heptanoate + NADH + 2 H(+). It carries out the reaction (2E,6E)-farnesal + NAD(+) + H2O = (2E,6E)-farnesoate + NADH + 2 H(+). Its function is as follows. Catalyzes the oxidation of medium and long-chain aliphatic aldehydes to fatty acids. Active on a variety of saturated and unsaturated aliphatic aldehydes between 6 and 24 carbons in length. Responsible for conversion of the sphingosine 1-phosphate (S1P) degradation product hexadecenal to hexadecenoic acid. The protein is Aldehyde dehydrogenase family 3 member A2 (ALDH3A2) of Macaca fascicularis (Crab-eating macaque).